A 155-amino-acid polypeptide reads, in one-letter code: NADH-ubiquinone oxidoreductase chain 6 (155 aa).

4 helical membrane passes run 24-44 (MSLLLALLTLSLCAVLWLGSF), 51-71 (YILFIVYIGGILVLFIYVCMI), 88-108 (AWGAVMLMSLTMETDTFIILG), and 118-138 (IPMTILIFLSIYLLIVFFAVV).

The protein belongs to the complex I subunit 6 family.

It is found in the mitochondrion membrane. The catalysed reaction is a ubiquinone + NADH + 5 H(+)(in) = a ubiquinol + NAD(+) + 4 H(+)(out). Functionally, core subunit of the mitochondrial membrane respiratory chain NADH dehydrogenase (Complex I) that is believed to belong to the minimal assembly required for catalysis. Complex I functions in the transfer of electrons from NADH to the respiratory chain. The immediate electron acceptor for the enzyme is believed to be ubiquinone. The protein is NADH-ubiquinone oxidoreductase chain 6 (ND6) of Albinaria caerulea (Land snail).